A 293-amino-acid polypeptide reads, in one-letter code: Nucleotide-binding protein cauri_1197 (293 aa).

Position 16–23 (16–23 (GMSGGGLT)) interacts with ATP. 67-70 (DVRS) is a binding site for GTP.

The protein belongs to the RapZ-like family.

Its function is as follows. Displays ATPase and GTPase activities. The polypeptide is Nucleotide-binding protein cauri_1197 (Corynebacterium aurimucosum (strain ATCC 700975 / DSM 44827 / CIP 107346 / CN-1) (Corynebacterium nigricans)).